We begin with the raw amino-acid sequence, 178 residues long: Zinc finger CCHC domain-containing protein 10 (178 aa).

Residues 21–38 (VRCQKCLEFGHWTYECKG) form a CCHC-type zinc finger. The segment at 66 to 178 (QSIGETNIEK…EPQKKKKKKK (113 aa)) is disordered. Low complexity-rich tracts occupy residues 85 to 113 (SVTSSSTSSSDSSASESSSESETSASSSS) and 121 to 164 (SLSS…SSES).

In Mus musculus (Mouse), this protein is Zinc finger CCHC domain-containing protein 10 (Zcchc10).